We begin with the raw amino-acid sequence, 506 residues long: Cytochrome P450 monooxygenase TES1 (506 aa).

Residues 26–46 (MSVVLAGLILLASIYFPRFMF) form a helical membrane-spanning segment. 4 N-linked (GlcNAc...) asparagine glycosylation sites follow: Asn167, Asn201, Asn298, and Asn427. Heme is bound at residue Cys440.

This sequence belongs to the cytochrome P450 family. Requires heme as cofactor.

It localises to the membrane. It participates in phytotoxin biosynthesis. Its function is as follows. Cytochrome P450 monooxygenase; part of the gene cluster that mediates the biosynthesis of the phytotoxin tentoxin, an inhibitor the F1-ATPase activity of chloroplasts, resulting in chlorosis in sensitive plants. Tentoxin is a cyclic tetrapeptide that consists of four amino acid residues: glycine (Gly), alanine (Ala), leucine (Leu), and dehydrophenylalanine (DPhe). In addition, both the Ala and DPhe residues are N-methylated. The nonribosomal peptide synthetase TES assembles tentoxin from the four substrate amino acids. The adenylation domains of each of the 4 modules are responsible for the activation of Gly, Ala, Leu and DPhe, respectively. In addition, the N-methyltransferase domains in the second and fourth modules of TES could be responsible for N-methylation of Ala and DPhe residues. Finally, the condensation domain located in the termination module probably catalyzes the formation of the intramolecular macrocyclization and then the release of tentoxin. The cytochrome P450 monooxygenase TES1 is predicted to be involved in the formation of DPhe. This chain is Cytochrome P450 monooxygenase TES1, found in Alternaria alternata (Alternaria rot fungus).